Here is a 341-residue protein sequence, read N- to C-terminus: Cysteine and histidine-rich domain-containing protein 1 (341 aa).

Zn(2+) is bound by residues cysteine 5, cysteine 10, cysteine 24, histidine 27, cysteine 42, cysteine 43, cysteine 59, histidine 64, cysteine 155, cysteine 160, cysteine 174, histidine 177, cysteine 192, cysteine 193, cysteine 209, and histidine 214. CHORD domains are found at residues 5-64 (CYNK…KGPH) and 155-214 (CKNG…RGKH). The disordered stretch occupies residues 61 to 81 (KGPHNQEKPAEPVKPEVKSSL). Residues 64–81 (HNQEKPAEPVKPEVKSSL) are compositionally biased toward basic and acidic residues. Residues 225-314 (VVPCRFDWHQ…AEPMSWARLD (90 aa)) form the CS domain. Positions 313–341 (LDLPPVAPPKEKEKEKDVDSEDECDDDED) are disordered. The span at 330–341 (VDSEDECDDDED) shows a compositional bias: acidic residues.

In terms of biological role, regulates centrosome duplication. This Danio rerio (Zebrafish) protein is Cysteine and histidine-rich domain-containing protein 1 (chordc1).